The primary structure comprises 976 residues: 3-O-beta-L-arabinopyranosyl-alpha-L-arabinofuranosidase (976 aa).

The signal sequence occupies residues 1-28 (MSHRNKALVAIVAGTALLISSGAAIGQA). Glu190 serves as the catalytic Proton donor. The Nucleophile role is filled by Glu315. The 136-residue stretch at 519–654 (LLVEEVENTV…DNTLDKFLLY (136 aa)) folds into the CBM6 domain.

Belongs to the glycosyl hydrolase 39 family.

It is found in the secreted. The enzyme catalyses Hydrolysis of beta-L-Arap-(1-&gt;3)-L-Araf disaccharides from non-reducing terminals in branches of type II arabinogalactan attached to proteins.. Its function is as follows. Hydrolase involved in the degradation of the gum arabic arabinogalactan protein (AGP) and larch AGP. Catalyzes the release of 3-O-beta-L-arabinopyranosyl-L-arabinose (beta-L-Arap-(1-&gt;3)-L-Ara) from gum arabic AGP and larch AGP. Also cleaves a small amount of beta-L-Arap-(1-&gt;3)-L-Ara from sugar beet arabinan, but wheat AGP cannot be used as a substrate. Can also release 3-O-alpha-D-galactopyranosyl-L-arabinose (alpha-D-Galp-(1-&gt;3)-L-Ara) from gum arabic AGP, with low efficiency. The polypeptide is 3-O-beta-L-arabinopyranosyl-alpha-L-arabinofuranosidase (Bifidobacterium pseudocatenulatum).